The primary structure comprises 115 residues: Ribonuclease P protein component (115 aa).

Belongs to the RnpA family. In terms of assembly, consists of a catalytic RNA component (M1 or rnpB) and a protein subunit.

The catalysed reaction is Endonucleolytic cleavage of RNA, removing 5'-extranucleotides from tRNA precursor.. RNaseP catalyzes the removal of the 5'-leader sequence from pre-tRNA to produce the mature 5'-terminus. It can also cleave other RNA substrates such as 4.5S RNA. The protein component plays an auxiliary but essential role in vivo by binding to the 5'-leader sequence and broadening the substrate specificity of the ribozyme. This is Ribonuclease P protein component from Baumannia cicadellinicola subsp. Homalodisca coagulata.